Consider the following 186-residue polypeptide: dCTP deaminase (186 aa).

DCTP is bound at residue Lys107 to Arg112. Residue Glu133 is the Proton donor/acceptor of the active site. The dCTP site is built by Gln152, Tyr166, and Gln176.

It belongs to the dCTP deaminase family. In terms of assembly, homotrimer.

The catalysed reaction is dCTP + H2O + H(+) = dUTP + NH4(+). It functions in the pathway pyrimidine metabolism; dUMP biosynthesis; dUMP from dCTP (dUTP route): step 1/2. Functionally, catalyzes the deamination of dCTP to dUTP. In Campylobacter lari (strain RM2100 / D67 / ATCC BAA-1060), this protein is dCTP deaminase.